An 87-amino-acid chain; its full sequence is Venom serine protease inhibitor (87 aa).

Positions 1-23 (MPRLVLVSFLFLAIFSVFIGGFA) are cleaved as a signal peptide. Cystine bridges form between Cys-27-Cys-61, Cys-36-Cys-57, Cys-40-Cys-53, Cys-44-Cys-81, and Cys-63-Cys-75. A TIL domain is found at 27 to 81 (CPRNEIFTRCHAACQPSCARLARKPFCIKICKPGCICTSGYLRNKNNVCVPRSRC).

Belongs to the serine protease inhibitor-like (TIL domain-containing) family. Specifically expressed by the venom gland.

The protein localises to the secreted. Functionally, antifibrinolytic and antimicrobial serine protease inhibitor. Inhibits trypsin, plasmin and microbial serine proteases but not chymotrypsin, thrombin and elastase. Inhibits the plasmin-mediated degradation of fibrin to fibrin degradation products. Also binds to bacterial and fungal surfaces and exhibits antimicrobial activity against fungi as well as Gram-positive and Gram-negative bacteria. This chain is Venom serine protease inhibitor, found in Apis cerana (Indian honeybee).